Consider the following 412-residue polypeptide: NADH-quinone oxidoreductase subunit D (412 aa).

The protein belongs to the complex I 49 kDa subunit family. As to quaternary structure, NDH-1 is composed of 14 different subunits. Subunits NuoB, C, D, E, F, and G constitute the peripheral sector of the complex.

The protein localises to the cell inner membrane. It catalyses the reaction a quinone + NADH + 5 H(+)(in) = a quinol + NAD(+) + 4 H(+)(out). In terms of biological role, NDH-1 shuttles electrons from NADH, via FMN and iron-sulfur (Fe-S) centers, to quinones in the respiratory chain. The immediate electron acceptor for the enzyme in this species is believed to be a menaquinone. Couples the redox reaction to proton translocation (for every two electrons transferred, four hydrogen ions are translocated across the cytoplasmic membrane), and thus conserves the redox energy in a proton gradient. The chain is NADH-quinone oxidoreductase subunit D from Flavobacterium johnsoniae (strain ATCC 17061 / DSM 2064 / JCM 8514 / BCRC 14874 / CCUG 350202 / NBRC 14942 / NCIMB 11054 / UW101) (Cytophaga johnsonae).